A 109-amino-acid polypeptide reads, in one-letter code: U4-lycotoxin-Ls1d (109 aa).

Positions 1-22 (MKVLVLFSVLFLTLFSYSSTEA) are cleaved as a signal peptide. Positions 23-44 (MDEFDSDAEEDMLSLMANEQVR) are excised as a propeptide. Residues 45-88 (AKACTPRLHDCSHDRHSCCRGELFKDVCYCFYPEGEDKTEVCSC) form a knottin domain region. Cystine bridges form between Cys48–Cys63, Cys55–Cys72, Cys62–Cys88, and Cys74–Cys86. Residues 89–108 (QQPKSHKYIEKVVDKARTVV) form a linear cationic cytotoxin domain region.

This sequence belongs to the neurotoxin 19 (CSTX) family. 05 (U4-Lctx) subfamily. As to expression, expressed by the venom gland.

Its subcellular location is the secreted. In terms of biological role, enhances the high-affinity desensitization of human P2RX3 purinoceptors. The sequence is that of U4-lycotoxin-Ls1d from Lycosa singoriensis (Wolf spider).